The primary structure comprises 233 residues: ATP-dependent Clp protease proteolytic subunit 2 (233 aa).

The active-site Nucleophile is Ser-116. His-141 is a catalytic residue. Residues 214-233 (EGLKSIQPNGEAADDSEDDA) form a disordered region.

The protein belongs to the peptidase S14 family. As to quaternary structure, fourteen ClpP subunits assemble into 2 heptameric rings which stack back to back to give a disk-like structure with a central cavity, resembling the structure of eukaryotic proteasomes.

It localises to the cytoplasm. It catalyses the reaction Hydrolysis of proteins to small peptides in the presence of ATP and magnesium. alpha-casein is the usual test substrate. In the absence of ATP, only oligopeptides shorter than five residues are hydrolyzed (such as succinyl-Leu-Tyr-|-NHMec, and Leu-Tyr-Leu-|-Tyr-Trp, in which cleavage of the -Tyr-|-Leu- and -Tyr-|-Trp bonds also occurs).. In terms of biological role, cleaves peptides in various proteins in a process that requires ATP hydrolysis. Has a chymotrypsin-like activity. Plays a major role in the degradation of misfolded proteins. The sequence is that of ATP-dependent Clp protease proteolytic subunit 2 from Salinibacter ruber (strain DSM 13855 / M31).